Reading from the N-terminus, the 706-residue chain is Polyribonucleotide nucleotidyltransferase (706 aa).

Residues aspartate 486 and aspartate 492 each contribute to the Mg(2+) site. In terms of domain architecture, KH spans 553-612 (PRIYTMKINPEKIKDVIGKGGSVIRALTDETGTTIEIEDDGTIKIAATDGDKAKHAIRRI). An S1 motif domain is found at 622-690 (NRIYAGKVTR…RQGRIRLSMK (69 aa)).

It belongs to the polyribonucleotide nucleotidyltransferase family. As to quaternary structure, component of the RNA degradosome, which is a multiprotein complex involved in RNA processing and mRNA degradation. The cofactor is Mg(2+).

Its subcellular location is the cytoplasm. It carries out the reaction RNA(n+1) + phosphate = RNA(n) + a ribonucleoside 5'-diphosphate. Its function is as follows. Involved in mRNA degradation. Catalyzes the phosphorolysis of single-stranded polyribonucleotides processively in the 3'- to 5'-direction. The polypeptide is Polyribonucleotide nucleotidyltransferase (Yersinia enterocolitica serotype O:8 / biotype 1B (strain NCTC 13174 / 8081)).